Reading from the N-terminus, the 277-residue chain is Large ribosomal subunit protein uL2 (277 aa).

The tract at residues 212 to 277 (RWRGKRPHVR…KFIVRGRKSK (66 aa)) is disordered. Basic residues predominate over residues 254–277 (TAGKKTRDKKKASTKFIVRGRKSK).

This sequence belongs to the universal ribosomal protein uL2 family. As to quaternary structure, part of the 50S ribosomal subunit. Forms a bridge to the 30S subunit in the 70S ribosome.

One of the primary rRNA binding proteins. Required for association of the 30S and 50S subunits to form the 70S ribosome, for tRNA binding and peptide bond formation. It has been suggested to have peptidyltransferase activity; this is somewhat controversial. Makes several contacts with the 16S rRNA in the 70S ribosome. In Leuconostoc mesenteroides subsp. mesenteroides (strain ATCC 8293 / DSM 20343 / BCRC 11652 / CCM 1803 / JCM 6124 / NCDO 523 / NBRC 100496 / NCIMB 8023 / NCTC 12954 / NRRL B-1118 / 37Y), this protein is Large ribosomal subunit protein uL2.